Consider the following 307-residue polypeptide: Woronin sorting complex protein (307 aa).

A run of 3 helical transmembrane segments spans residues 106–125, 146–167, and 207–227; these read MATY…IWIL, NLIV…IAGA, and AWMP…NYIT. Positions 241-264 are enriched in basic and acidic residues; sequence GDGAHGDHRHDRERERDRERERHS. Residues 241–307 form a disordered region; that stretch reads GDGAHGDHRH…YPSLGQNPRY (67 aa). A compositionally biased stretch (low complexity) spans 266–278; sequence PPHGHGPSHGGRP.

This sequence belongs to the peroxisomal membrane protein PXMP2/4 family. As to quaternary structure, self-assembles into detergent-resistant oligomers and forms a complex with hex-1 assemblies.

Its subcellular location is the peroxisome membrane. The protein resides in the cell septum. Its function is as follows. Woronin sorting complex protein involved in both Woronin bodies (WB) formation and inherence. Localizes to large peroxisome membranes where it self-assembles into detergent-resistant oligomers that envelop hex-1 assemblies, producing asymmetrical nascent WBs. These structures are then delivered to the cell cortex, which permits partitioning of the nascent WB and WB inheritance. In Neurospora crassa (strain ATCC 24698 / 74-OR23-1A / CBS 708.71 / DSM 1257 / FGSC 987), this protein is Woronin sorting complex protein.